The following is a 147-amino-acid chain: MERTFVYLKPNTIQRQLIGEVISRFERKGLKIVALKMLKMTMEQAEKLYEEHKGKDFYKPLLKFVTSGPIVAMILEGPRAVEVVRHVIGKTDPLEANSGTIRGEFGVTIRKNIVHASDSPEHAKHEMSIFFDTSEIVDYKLLLEEQF.

The ATP site is built by lysine 9, phenylalanine 57, arginine 85, threonine 91, arginine 102, and asparagine 112. The active-site Pros-phosphohistidine intermediate is histidine 115.

It belongs to the NDK family. Homotetramer. The cofactor is Mg(2+).

Its subcellular location is the cytoplasm. It carries out the reaction a 2'-deoxyribonucleoside 5'-diphosphate + ATP = a 2'-deoxyribonucleoside 5'-triphosphate + ADP. It catalyses the reaction a ribonucleoside 5'-diphosphate + ATP = a ribonucleoside 5'-triphosphate + ADP. Major role in the synthesis of nucleoside triphosphates other than ATP. The ATP gamma phosphate is transferred to the NDP beta phosphate via a ping-pong mechanism, using a phosphorylated active-site intermediate. The polypeptide is Nucleoside diphosphate kinase (Kosmotoga olearia (strain ATCC BAA-1733 / DSM 21960 / TBF 19.5.1)).